The sequence spans 242 residues: DnaJ homolog subfamily B member 3 (242 aa).

One can recognise a J domain in the interval 1-69 (MANYYEVLGV…KKRDVYDRYG (69 aa)).

In terms of tissue distribution, testis specific.

Functionally, may operate as a co-chaperone of the male germ cell- and haploid stage-specific Hsp70 proteins. This Macaca fuscata fuscata (Japanese macaque) protein is DnaJ homolog subfamily B member 3 (DNAJB3).